Here is a 1854-residue protein sequence, read N- to C-terminus: Protein virilizer (1854 aa).

S186 carries the post-translational modification Phosphoserine. 2 stretches are compositionally biased toward basic and acidic residues: residues 202–214 and 236–259; these read YHQH…QREM and THSE…DWSR. 5 disordered regions span residues 202 to 361, 777 to 821, 1570 to 1589, 1720 to 1788, and 1804 to 1854; these read YHQH…EIIG, NPEE…GKPV, TSTE…ASSC, VRGR…NRGS, and IGSP…SYLR. S258, S260, and S276 each carry phosphoserine. Residues 275–285 show a composition bias toward basic and acidic residues; it reads RSRSVVDEHKW. At T288 the chain carries Phosphothreonine. Residue S295 is modified to Phosphoserine. T297 bears the Phosphothreonine mark. Phosphoserine is present on residues S301 and S312. Basic and acidic residues-rich tracts occupy residues 325–343 and 777–796; these read HSSE…EDRS and NPEE…KAME. The stretch at 779–808 forms a coiled coil; it reads EEKEEKAEKSDAEDKAMEVENEAVEAGGEK. Low complexity-rich tracts occupy residues 1738-1748 and 1816-1838; these read SRPPNTSRPPS and SYRS…PHYS.

The protein belongs to the vir family. As to quaternary structure, component of the WMM complex, a N6-methyltransferase complex composed of a catalytic subcomplex, named MAC, and of an associated subcomplex, named MACOM. The MAC subcomplex is composed of Ime4/Mettl3 and Mettl14. The MACOM subcomplex is composed of fl(2)d, Flacc/Xio, Hakai, vir, and, in some cases of nito. Part of a complex containing fl(2)d, Sxl and vir.

It localises to the nucleus. Functionally, associated component of the WMM complex, a complex that mediates N6-methyladenosine (m6A) methylation of mRNAs, a modification that plays a role in the efficiency of mRNA splicing and is required for sex determination. Required for sex determination and dosage compensation via Sxl alternative splicing: m6A methylation acts as a key regulator of Sxl pre-mRNA and promotes female-specific alternative splicing of Sxl, which determines female physiognomy. M6A methylation is also required for neuronal functions. Required for proper inclusion of regulated exons in Ubx transcripts, leading to isoforms Ia/b and IIa/b. This is Protein virilizer from Drosophila melanogaster (Fruit fly).